The following is a 208-amino-acid chain: Mediator of RNA polymerase II transcription subunit 18 (208 aa).

Ser-66 carries the phosphoserine modification.

The protein belongs to the Mediator complex subunit 18 family. As to quaternary structure, component of the Mediator complex, which is composed of MED1, MED4, MED6, MED7, MED8, MED9, MED10, MED11, MED12, MED13, MED13L, MED14, MED15, MED16, MED17, MED18, MED19, MED20, MED21, MED22, MED23, MED24, MED25, MED26, MED27, MED29, MED30, MED31, CCNC, CDK8 and CDC2L6/CDK11. The MED12, MED13, CCNC and CDK8 subunits form a distinct module termed the CDK8 module. Mediator containing the CDK8 module is less active than Mediator lacking this module in supporting transcriptional activation. Individual preparations of the Mediator complex lacking one or more distinct subunits have been variously termed ARC, CRSP, DRIP, PC2, SMCC and TRAP.

Its subcellular location is the nucleus. Functionally, component of the Mediator complex, a coactivator involved in the regulated transcription of nearly all RNA polymerase II-dependent genes. Mediator functions as a bridge to convey information from gene-specific regulatory proteins to the basal RNA polymerase II transcription machinery. Mediator is recruited to promoters by direct interactions with regulatory proteins and serves as a scaffold for the assembly of a functional preinitiation complex with RNA polymerase II and the general transcription factors. This Mus musculus (Mouse) protein is Mediator of RNA polymerase II transcription subunit 18 (Med18).